An 815-amino-acid polypeptide reads, in one-letter code: TBC1 domain family member 5 (815 aa).

Serine 44 is subject to Phosphoserine. A required for interaction with retromer; involved in interaction with ATG8 family proteins region spans residues 56-64 (MKEWEELFV). The LIR 1 motif lies at 57 to 62 (KEWEEL). The Rab-GAP TBC domain occupies 81-359 (LRSSRFRSIC…VVWDALFADS (279 aa)). An Asymmetric dimethylarginine; alternate modification is found at arginine 448. Residue arginine 448 is modified to Omega-N-methylarginine; alternate. At serine 460 the chain carries Phosphoserine. Residues 475 to 591 (PGSMGGPVPG…SATKKDSFFS (117 aa)) are disordered. 2 stretches are compositionally biased toward low complexity: residues 483–492 (PGNNSSSSFS) and 510–539 (QQQQQQQHQQQQQQQPQQQQQQHQQQQQQQ). Serine 546, serine 563, serine 565, serine 568, serine 578, and serine 608 each carry phosphoserine. Residues 556-568 (SSKTISSSPSIES) show a composition bias toward low complexity. Disordered regions lie at residues 702–733 (SGQDQGSQVPRAAKQASSEMPGCTGGTTPDDF) and 754–815 (QPLL…PLDI). A compositionally biased stretch (polar residues) spans 754-765 (QPLLTLRSTSGK). Over residues 783–796 (PASASASSSNPSSS) the composition is skewed to low complexity. An LIR 2 motif is present at residues 805-809 (SGFTI). The required for interaction with ATG8 family proteins stretch occupies residues 806 to 811 (GFTIVS). Serine 811 bears the Phosphoserine mark.

As to quaternary structure, interacts with MAP1LC3A, MAP1LC3B, MAP1LC3C, GABARAP, GABARAPL1, GABARAPL2. Interacts with VPS29 and VPS35; indicative for an association with retromer CSC subcomplex. MAP1LC3A and VPS29 compete for binding to TBC1D5. Interacts with AP2M1; indicative for an association with the AP2 complex. Interacts with ULK1 and ATG13 (phosphorylated); indicative for an association with the activated ULK1-ATG13-FIP200 complex. Interacts with ATG9A; the interactions seems to be restricted to the AP2-clathrin-associated fraction of ATG9A.

It is found in the endosome membrane. Its subcellular location is the cytoplasmic vesicle. The protein resides in the autophagosome. Functionally, may act as a GTPase-activating protein for Rab family protein(s). May act as a GAP for RAB7A. Can displace RAB7A and retromer CSC subcomplex from the endosomal membrane to the cytosol; at least retromer displacement seems to require its catalytic activity. Required for retrograde transport of cargo proteins from endosomes to the trans-Golgi network (TGN); the function seems to require its catalytic activity. Involved in regulation of autophagy. May act as a molecular switch between endosomal and autophagosomal transport and is involved in reprogramming vesicle trafficking upon autophagy induction. Involved in the trafficking of ATG9A upon activation of autophagy. May regulate the recruitment of ATG9A-AP2-containing vesicles to autophagic membranes. In Mus musculus (Mouse), this protein is TBC1 domain family member 5 (Tbc1d5).